The primary structure comprises 326 residues: tRNA-modifying protein YgfZ (326 aa).

Positions 27 and 189 each coordinate folate.

This sequence belongs to the tRNA-modifying YgfZ family.

The protein localises to the cytoplasm. Functionally, folate-binding protein involved in regulating the level of ATP-DnaA and in the modification of some tRNAs. It is probably a key factor in regulatory networks that act via tRNA modification, such as initiation of chromosomal replication. The protein is tRNA-modifying protein YgfZ of Shigella boydii serotype 4 (strain Sb227).